The following is a 351-amino-acid chain: MRLQILLRGFSSTPQTGFPRGDPVRLHGNTTTGLPIPLRNSSSNQILLREGRGDYPDGARRETRRYYQGPTPTPRSLSPPIYRPPPSYEESRRRRKLRRRQDGRVKYPASPYRTKPPGETSSDDEDEGRGGHEPRPQRRLPRGLRDRGERAPERRRPPVQEGEEDVDGVGALLDDLKLYQEPPGDPVEDSDSPGSRLTPAPPDLSRYDSTRLQVDAESSPPRTPRPAPTLVAECTPGRPSPQTGSGQQALGEPPSRPSRGHCRDPRTACLLIIKGSSNQVKCLRFRLKSWHHSLFSYISTTWQWVPSVGSNRIGRSRILVMCEDSAQMDRFLCTVKIPAGMTVEQCSMASV.

The tract at residues 11 to 262 is disordered; it reads SSTPQTGFPR…PPSRPSRGHC (252 aa). Polar residues predominate over residues 28–46; sequence GNTTTGLPIPLRNSSSNQI. Basic and acidic residues-rich tracts occupy residues 49 to 65 and 143 to 158; these read REGR…ETRR and GLRD…RRPP.

The protein belongs to the papillomaviridae E8^E2C protein family.

It localises to the host nucleus. Plays a role in limiting the replication of viral DNA in keratinocytes. Recruits the host NCoR/SMRT complex to viral replication foci to mediate repression of both viral replication and transcription. The chain is Protein E8^E2C from Mastomys natalensis (African soft-furred rat).